We begin with the raw amino-acid sequence, 513 residues long: MEVSVLMWVLLFYSLLGFQVTTARLDRNNFPSDFMFGTASSAYQYEGAVREDGKGPSTWDALTHMPGRIKDSSNGDVAVDQYHRYMEDIELMASLGLDAYRFSISWSRILPEGRGEINMAGIEYYNNLIDALLQNGIQPFVTLFHFDLPKALEDSYGGWLSPQIINDFEAYAEICFRAFGDRVKYWATVNEPNLFVPLGYTVGIFPPTRCAAPHANPLCMTGNCSSAEPYLAAHHVLLAHASAVEKYREKYQKIQGGSIGLVISAPWYEPLENSPEERSAVDRILSFNLRWFLDPIVFGDYPQEMRERLGSRLPSISSELSAKLRGSFDYMGINHYTTLYATSTPPLSPDHTQYLYPDSRVYLTGERHGVSIGERTGMDGLFVVPHGIQKIVEYVKEFYDNPTIIIAENGYPESEESSSTLQENLNDVRRIRFHGDCLSYLSAAIKNGSDVRGYFVWSLLDNFEWAFGYTIRFGLYHVDFISDQKRYPKLSAQWFRQFLQHDDQGSIRSSSSI.

A signal peptide spans 1-23 (MEVSVLMWVLLFYSLLGFQVTTA). Residues Gln-44, His-145, and 190–191 (NE) contribute to the a beta-D-glucoside site. Glu-191 acts as the Proton donor in catalysis. Cys-210 and Cys-219 are disulfide-bonded. Asn-223 carries an N-linked (GlcNAc...) asparagine glycan. 2 residues coordinate a beta-D-glucoside: Tyr-336 and Glu-408. Catalysis depends on Glu-408, which acts as the Nucleophile. Asn-447 carries N-linked (GlcNAc...) asparagine glycosylation. Residues Trp-457, 464 to 465 (EW), and Phe-473 contribute to the a beta-D-glucoside site.

The protein belongs to the glycosyl hydrolase 1 family. Homodimer. In terms of processing, glycosylated.

It catalyses the reaction 4-O-(beta-D-glucosyl)-(E)-coniferol + H2O = (E)-coniferol + D-glucose. With respect to regulation, inhibited by glucono-1,5-lactone, but not by bromoconduritol or conduritol B epoxide. Functionally, involved in the release of monolignols for lignin biosynthesis. Unable to hydrolyze 4-nitrophenyl beta-cellobioside or alpha-linked methylumbelliferyl glucoside. The sequence is that of Coniferin beta-glucosidase from Pinus contorta (Shore pine).